A 77-amino-acid polypeptide reads, in one-letter code: MSKLCQITGKKPMMGNKVSHANNKTKRIFNLNLSKKRFFIKKKWILLKVSSAGIKTINKFGIEKTLKKLNFNVKKKY.

Belongs to the bacterial ribosomal protein bL28 family.

The chain is Large ribosomal subunit protein bL28 from Karelsulcia muelleri (strain GWSS) (Sulcia muelleri).